Here is a 230-residue protein sequence, read N- to C-terminus: Claudin-2 (230 aa).

Residues Met1 to Gln7 lie on the Cytoplasmic side of the membrane. The chain crosses the membrane as a helical span at residues Leu8 to Pro28. Residues Ser29–Gln81 lie on the Extracellular side of the membrane. Cys54 and Cys64 are joined by a disulfide. A helical transmembrane segment spans residues Ala82–Met102. Residues Arg103–Arg116 are Cytoplasmic-facing. The helical transmembrane segment at Leu117 to Ala137 threads the bilayer. Topologically, residues Trp138–Glu162 are extracellular. The chain crosses the membrane as a helical span at residues Ala163–Phe183. Residues Ser184–Val230 lie on the Cytoplasmic side of the membrane. Positions Thr205–Val230 are disordered. Residue Lys218 forms a Glycyl lysine isopeptide (Lys-Gly) (interchain with G-Cter in SUMO) linkage. Phosphoserine is present on residues Ser219 and Ser223. The span at Glu220–Val230 shows a compositional bias: polar residues. Residues Tyr229–Val230 are interaction with TJP1, TJP2 and TJP3.

The protein belongs to the claudin family. In terms of assembly, can form homo- and heteropolymers with other claudins to mediate paracellular barrier and channel functions of tight junctions in response to physiological stimuli. Homopolymers interact with CLDN3, but not CLDN1, homopolymers. Directly interacts with TJP1/ZO-1, TJP2/ZO-2 and TJP3/ZO-3. Post-translationally, the disulfide bond is necessary for pore formation, but is not required for correct protein trafficking.

It is found in the cell junction. It localises to the tight junction. Its subcellular location is the cell membrane. The catalysed reaction is Na(+)(in) = Na(+)(out). The enzyme catalyses K(+)(in) = K(+)(out). It catalyses the reaction Rb(+)(in) = Rb(+)(out). It carries out the reaction Li(+)(in) = Li(+)(out). The catalysed reaction is Cs(+)(in) = Cs(+)(out). The enzyme catalyses Ca(2+)(in) = Ca(2+)(out). It catalyses the reaction methylamine(out) = methylamine(in). It carries out the reaction choline(out) = choline(in). The catalysed reaction is H2O(in) = H2O(out). In terms of biological role, forms paracellular channels: polymerizes in tight junction strands with cation- and water-selective channels through the strands, conveying epithelial permeability in a process known as paracellular tight junction permeability. In intestinal epithelium, allows for sodium and water fluxes from the peritoneal side to the lumen of the intestine to regulate nutrient absorption and clear enteric pathogens as part of mucosal immune response. In kidney, allows passive sodium and calcium reabsorption across proximal tubules from the lumen back to the bloodstream. In the hepatobiliary tract, allows paracellular water and cation fluxes in the hepatic perivenous areas and biliary epithelium to generate bile flow and maintain osmotic gradients. The chain is Claudin-2 (CLDN2) from Canis lupus familiaris (Dog).